A 513-amino-acid chain; its full sequence is Zinc finger protein 395 (513 aa).

Over residues 17–29 the composition is skewed to low complexity; that stretch reads ARVLGPSASEGPS. Residues 17 to 56 form a disordered region; it reads ARVLGPSASEGPSAAPPSEPLLEGAAPQPFTTSDDTPCQE. Polar residues predominate over residues 45-55; it reads PFTTSDDTPCQ. The Nuclear export signal motif lies at 165–174; that stretch reads MDEMMAAMVL. A disordered region spans residues 204–269; the sequence is KESGDISDSG…DPFLLDEPAP (66 aa). Low complexity predominate over residues 209 to 229; it reads ISDSGSSTTSGHWSGSSGVST. Serine 248 bears the Phosphoserine mark. Residues 280-305 form a C2H2-type zinc finger; it reads YKCLWPNCGKVLRSIVGIKRHVKALH. A disordered region spans residues 335–394; it reads AAAAAAAGTPVPGTPTSEPAPTPSMTGLPLSALPPPLHKAQSSGPEHPGPESSLPSGALS. Positions 348–359 are enriched in polar residues; sequence TPTSEPAPTPSM. Residues serine 376 and serine 449 each carry the phosphoserine modification. A compositionally biased stretch (low complexity) spans 376–391; sequence SSGPEHPGPESSLPSG.

In terms of assembly, interacts with repression-mediating E2 binding site P2 of human papillomavirus type 8 (HPV8). Widely expressed.

It localises to the cytoplasm. The protein resides in the nucleus. Functionally, plays a role in papillomavirus genes transcription. The chain is Zinc finger protein 395 (ZNF395) from Homo sapiens (Human).